The primary structure comprises 484 residues: Chromosomal replication initiator protein DnaA (484 aa).

Residues 1–74 are domain I, interacts with DnaA modulators; it reads MEKSKNIWSL…ILTKNGYNNV (74 aa). A domain II region spans residues 74–139; sequence VTIVFTNQPP…EEEPTNFKNP (66 aa). A domain III, AAA+ region region spans residues 140–356; sequence FLKKRYTFEN…AAVTKLKAYI (217 aa). 4 residues coordinate ATP: G184, G186, K187, and T188. Residues 357–484 form a domain IV, binds dsDNA region; the sequence is DLDNIEIDID…TELMNKIKKN (128 aa).

Belongs to the DnaA family. As to quaternary structure, oligomerizes as a right-handed, spiral filament on DNA at oriC.

The protein localises to the cytoplasm. Functionally, plays an essential role in the initiation and regulation of chromosomal replication. ATP-DnaA binds to the origin of replication (oriC) to initiate formation of the DNA replication initiation complex once per cell cycle. Binds the DnaA box (a 9 base pair repeat at the origin) and separates the double-stranded (ds)DNA. Forms a right-handed helical filament on oriC DNA; dsDNA binds to the exterior of the filament while single-stranded (ss)DNA is stabiized in the filament's interior. The ATP-DnaA-oriC complex binds and stabilizes one strand of the AT-rich DNA unwinding element (DUE), permitting loading of DNA polymerase. After initiation quickly degrades to an ADP-DnaA complex that is not apt for DNA replication. Binds acidic phospholipids. The polypeptide is Chromosomal replication initiator protein DnaA (Borrelia garinii subsp. bavariensis (strain ATCC BAA-2496 / DSM 23469 / PBi) (Borreliella bavariensis)).